The chain runs to 1342 residues: DNA-directed RNA polymerase subunit beta (1342 aa).

Belongs to the RNA polymerase beta chain family. The RNAP catalytic core consists of 2 alpha, 1 beta, 1 beta' and 1 omega subunit. When a sigma factor is associated with the core the holoenzyme is formed, which can initiate transcription.

The enzyme catalyses RNA(n) + a ribonucleoside 5'-triphosphate = RNA(n+1) + diphosphate. DNA-dependent RNA polymerase catalyzes the transcription of DNA into RNA using the four ribonucleoside triphosphates as substrates. The polypeptide is DNA-directed RNA polymerase subunit beta (Klebsiella pneumoniae (strain 342)).